The chain runs to 207 residues: Ras-related protein Rab7A (207 aa).

GTP-binding positions include 15–22 (GDSGVGKT), 63–67 (DTAGQ), and 125–128 (NKID). S-geranylgeranyl cysteine attachment occurs at residues cysteine 205 and cysteine 207. Cysteine 207 carries the post-translational modification Cysteine methyl ester.

It belongs to the small GTPase superfamily. Rab family.

The protein localises to the cell membrane. Protein transport. Probably involved in vesicular traffic. The polypeptide is Ras-related protein Rab7A (Mesembryanthemum crystallinum (Common ice plant)).